Reading from the N-terminus, the 468-residue chain is Putative FBD-associated F-box protein At5g22720 (468 aa).

The F-box domain occupies 22–68; that stretch reads EDLISQLPDSLITQILFYLQTKKAVTTSVLSKRWRSLWLSTPGLVLI. The FBD domain maps to 375-433; the sequence is ELRLSFVPRCLLSSLEFVEIKGCSRSNMERVKYVGEPIETKLARYFVENSTILKKLVLP.

The protein is Putative FBD-associated F-box protein At5g22720 of Arabidopsis thaliana (Mouse-ear cress).